The chain runs to 354 residues: Heme A synthase (354 aa).

8 consecutive transmembrane segments (helical) span residues 21 to 41 (VAVWLLACCFMVAVMVLLGGL), 106 to 126 (VWGRLIGVVFGLPFLWLALSG), 139 to 159 (VFLLGAAQGGMGWFMVKSGLV), 171 to 191 (AHLALAFLIHGWMFWLALDIL), 212 to 232 (MLGLTGLVIVTLLFGGLVAGL), 268 to 288 (VQFGHRTLAEITIVVALVGWF), 304 to 324 (AVGLMALLQVGLGIGTLVMVV), and 326 to 346 (VWLASAHQMGAMALLTLCLWA). Histidine 272 contacts heme. Histidine 332 serves as a coordination point for heme.

Belongs to the COX15/CtaA family. Type 2 subfamily. As to quaternary structure, interacts with CtaB. The cofactor is heme b.

It is found in the cell membrane. It catalyses the reaction Fe(II)-heme o + 2 A + H2O = Fe(II)-heme a + 2 AH2. Its pathway is porphyrin-containing compound metabolism; heme A biosynthesis; heme A from heme O: step 1/1. In terms of biological role, catalyzes the conversion of heme O to heme A by two successive hydroxylations of the methyl group at C8. The first hydroxylation forms heme I, the second hydroxylation results in an unstable dihydroxymethyl group, which spontaneously dehydrates, resulting in the formyl group of heme A. The polypeptide is Heme A synthase (Paramagnetospirillum magneticum (strain ATCC 700264 / AMB-1) (Magnetospirillum magneticum)).